A 345-amino-acid chain; its full sequence is cAMP-responsive element modulator (345 aa).

The region spanning 88–147 is the KID domain; the sequence is VQVAAIAETDESAESEGVIDSHKRREILSRRPSYRKILNELSSDVPGVPKIEEERSEEEG. Ser-102, Ser-129, Ser-271, Ser-274, and Ser-277 each carry phosphoserine. A bZIP domain is found at 286–345; the sequence is TRKRELRLMKNREAAKECRRRKKEYVKCLESRVAVLEVQNKKLIEELETLKDICSPKTDY. Residues 287 to 312 are basic motif; it reads RKRELRLMKNREAAKECRRRKKEYVK. Residues 314–335 form a leucine-zipper region; sequence LESRVAVLEVQNKKLIEELETL.

Belongs to the bZIP family. As to quaternary structure, binds DNA as a dimer. Interacts with FHL5. Interacts with CDC34. May interact with TSSK4. In terms of processing, isoform 9 is ubiquitinated by CDC34 and RAD6B in order to be degraded by the proteasome. Post-translationally, stimulated by phosphorylation. Phosphorylated on Ser-116 by TSSK4 in vitro. Expressed in testes (round spermatids) (at protein level). Isoform 14 is the major activator form in testes.

Its subcellular location is the nucleus. The protein localises to the cytoplasm. Transcriptional regulator that binds the cAMP response element (CRE), a sequence present in many viral and cellular promoters. Isoforms are either transcriptional activators or repressors. Plays a role in spermatogenesis and is involved in spermatid maturation. In terms of biological role, may play a role in the regulation of the circadian clock: acts as a transcriptional repressor of the core circadian component PER1 by directly binding to cAMP response elements in its promoter. This chain is cAMP-responsive element modulator, found in Homo sapiens (Human).